The sequence spans 218 residues: Octanoyltransferase (218 aa).

A BPL/LPL catalytic domain is found at isoleucine 32–isoleucine 211. Substrate-binding positions include arginine 75–histidine 82, serine 142–glycine 144, and glycine 155–serine 157. Catalysis depends on cysteine 173, which acts as the Acyl-thioester intermediate.

This sequence belongs to the LipB family.

It is found in the cytoplasm. It carries out the reaction octanoyl-[ACP] + L-lysyl-[protein] = N(6)-octanoyl-L-lysyl-[protein] + holo-[ACP] + H(+). Its pathway is protein modification; protein lipoylation via endogenous pathway; protein N(6)-(lipoyl)lysine from octanoyl-[acyl-carrier-protein]: step 1/2. In terms of biological role, catalyzes the transfer of endogenously produced octanoic acid from octanoyl-acyl-carrier-protein onto the lipoyl domains of lipoate-dependent enzymes. Lipoyl-ACP can also act as a substrate although octanoyl-ACP is likely to be the physiological substrate. The chain is Octanoyltransferase from Buchnera aphidicola subsp. Schizaphis graminum (strain Sg).